The sequence spans 344 residues: MLTDRQLLILQVIIDDFIRSGQPVGSRTLSKKHQIAFSSATIRNEMADLEELGYIEKTHISSGRVPSEKGYRYYVDHLLPPQRLTRADIQKIRSVFAERIYELEKLMQKSAQILSELTNYTSIALGPTFKESKLKQMQIVPLNEQTAVAIVVTDTGHVENRVVTIPSSMDAGDLEKMVNIFNERLNGVPLIDLKEKMETEVADVLRRHIRNYDSVLNTLIETLDAPEEEKVFFAGKANMLNQPEFSDIQKVRPLLDIIEQEKDIYRLLRKQTQKGVRVSIGHENELRGMENCSLITATYSVGDEPLGAIAILGPTRMEYSRVITVLNRVASDLSAALAKWYQSQ.

It belongs to the HrcA family.

In terms of biological role, negative regulator of class I heat shock genes (grpE-dnaK-dnaJ and groELS operons). Prevents heat-shock induction of these operons. In Geobacillus kaustophilus (strain HTA426), this protein is Heat-inducible transcription repressor HrcA.